The chain runs to 323 residues: Beta-ketoacyl-[acyl-carrier-protein] synthase III (323 aa).

Active-site residues include Cys114 and His250. The tract at residues 251–255 is ACP-binding; that stretch reads QANIR. Asn280 is an active-site residue.

Belongs to the thiolase-like superfamily. FabH family. As to quaternary structure, homodimer.

The protein resides in the cytoplasm. The enzyme catalyses malonyl-[ACP] + acetyl-CoA + H(+) = 3-oxobutanoyl-[ACP] + CO2 + CoA. It functions in the pathway lipid metabolism; fatty acid biosynthesis. Its function is as follows. Catalyzes the condensation reaction of fatty acid synthesis by the addition to an acyl acceptor of two carbons from malonyl-ACP. Catalyzes the first condensation reaction which initiates fatty acid synthesis and may therefore play a role in governing the total rate of fatty acid production. Possesses both acetoacetyl-ACP synthase and acetyl transacylase activities. Its substrate specificity determines the biosynthesis of branched-chain and/or straight-chain of fatty acids. The chain is Beta-ketoacyl-[acyl-carrier-protein] synthase III from Ruegeria pomeroyi (strain ATCC 700808 / DSM 15171 / DSS-3) (Silicibacter pomeroyi).